Reading from the N-terminus, the 960-residue chain is Dynamin-like GTPase OPA1, mitochondrial (960 aa).

A mitochondrion-targeting transit peptide spans 1–87; it reads MWRLRRAAVA…IKYGYQPRRN (87 aa). At 88–96 the chain is on the mitochondrial matrix side; that stretch reads FWPARLATR. A helical membrane pass occupies residues 97–113; sequence LLKLRYLILGSAVGGGY. The Mitochondrial intermembrane portion of the chain corresponds to 114–770; that stretch reads TAKKTFDQWK…NAIENMVGPD (657 aa). 2 short sequence motifs (LQQQIQ motif) span residues 181 to 186 and 217 to 222; these read DFFTSG and QLQEEL. A coiled-coil region spans residues 210-254; sequence SDKEKIDQLQEELLHTQLKYQRILERLEKENKELRKLVLQKDDKG. K228 is subject to N6-acetyllysine. Residues 235–240 carry the LQQQIQ motif motif; it reads RLEKEN. Residues 285–561 enclose the Dynamin-type G domain; the sequence is QDHLPRVVVV…FWKMVRESVE (277 aa). A G1 motif region spans residues 295-302; sequence GDQSAGKT. GTP is bound by residues S298, G300, K301, T302, S303, and G317. A Mg(2+)-binding site is contributed by T302. Residues 321–324 form a G2 motif region; the sequence is MMTR. Mg(2+)-binding residues include T323 and D398. The interval 398–401 is G3 motif; that stretch reads DLPG. The tract at residues 467 to 470 is G4 motif; it reads TKVD. GTP-binding residues include K468, D470, T503, G506, and N507. A G5 motif region spans residues 501-504; that stretch reads VVTG. 2 stalk region regions span residues 589–836 and 874–928; these read DRNE…IKDT and CNDV…IKLL. The paddle region stretch occupies residues 736–856; sequence SDKQQWDAAI…KTALNHCNLC (121 aa). An intramembrane segment occupies 771 to 781; that stretch reads WKKRWLYWKNR. Over 782–960 the chain is Mitochondrial intermembrane; sequence TQEQCVHNET…AFIEALHQEK (179 aa). Residues C856 and C874 are joined by a disulfide bond. Positions 895–960 form a coiled coil; the sequence is RQQLTNTEVR…AFIEALHQEK (66 aa).

It belongs to the TRAFAC class dynamin-like GTPase superfamily. Dynamin/Fzo/YdjA family. In terms of assembly, oligomeric complex consisting of membrane-bound and soluble forms of OPA1. Interacts with RCC1L; RCC1L acts as a guanine nucleotide exchange factor (GEF) for OPA1 by exchanging bound GDP for free GTP. Interacts with CHCHD3 and IMMT; these interactions occur preferentially with soluble OPA1 forms. Interacts with PRELID1. Post-translationally, cleaved by OMA1 or YME1L downstream of the transmembrane region in response to different signals to generate soluble forms. Cleaved by OMA1 at position S1 following stress conditions, generating the short soluble form (Dynamin-like GTPase OPA1, short form; S-OPA1). AFG3L2 is involved in the regulation of OMA1-dependent processing of OPA1. PARL-dependent proteolytic processing releases an antiapoptotic soluble form not required for mitochondrial fusion. Cleavage at position S2 by YME1L is required to mediate oxidative phosphorylation (OXPHOS)-induced mitochondrial fusion. Cleavage occurs in the sequence motif Leu-Gln-Gln-Gln-Ile-Gln (LQQQIQ). In terms of processing, cleavage at position S2 by YME1L is required to mediate oxidative phosphorylation (OXPHOS)-induced mitochondrial fusion. Cleavage occurs in the sequence motif Leu-Gln-Gln-Gln-Ile-Gln (LQQQIQ). Cleavage at position S3 by YME1L is required for membrane tubulation. Post-translationally, cleavage at position S3 by YME1L is required for membrane tubulation. In terms of tissue distribution, highly expressed in retina. Also expressed in brain, testis, heart and skeletal muscle. Low levels of all isoforms expressed in a variety of tissues. Expressed in retina, skeletal muscle, heart, lung, ovary, colon, thyroid gland, leukocytes and fetal brain. Low levels of all isoforms expressed in a variety of tissues. As to expression, isoform 2 expressed in colon, liver, kidney, thyroid gland and leukocytes.

The protein resides in the mitochondrion inner membrane. It is found in the mitochondrion intermembrane space. The enzyme catalyses GTP + H2O = GDP + phosphate + H(+). Its activity is regulated as follows. Activated by guanine nucleotide exchange factor RCC1L. Dynamin-related GTPase that is essential for normal mitochondrial morphology by mediating fusion of the mitochondrial inner membranes, regulating cristae morphology and maintaining respiratory chain function. Exists in two forms: the transmembrane, long form (Dynamin-like GTPase OPA1, long form; L-OPA1), which is tethered to the inner mitochondrial membrane, and the short soluble form (Dynamin-like GTPase OPA1, short form; S-OPA1), which results from proteolytic cleavage and localizes in the intermembrane space. Both forms (L-OPA1 and S-OPA1) cooperate to catalyze the fusion of the mitochondrial inner membrane. The equilibrium between L-OPA1 and S-OPA1 is essential: excess levels of S-OPA1, produced by cleavage by OMA1 following loss of mitochondrial membrane potential, lead to an impaired equilibrium between L-OPA1 and S-OPA1, inhibiting mitochondrial fusion. The balance between L-OPA1 and S-OPA1 also influences cristae shape and morphology. Involved in remodeling cristae and the release of cytochrome c during apoptosis. Proteolytic processing by PARL in response to intrinsic apoptotic signals may lead to disassembly of OPA1 oligomers and release of the caspase activator cytochrome C (CYCS) into the mitochondrial intermembrane space. Acts as a regulator of T-helper Th17 cells, which are characterized by cells with fused mitochondria with tight cristae, by mediating mitochondrial membrane remodeling: OPA1 is required for interleukin-17 (IL-17) production. Its role in mitochondrial morphology is required for mitochondrial genome maintenance. Functionally, constitutes the transmembrane long form (L-OPA1) that plays a central role in mitochondrial inner membrane fusion and cristae morphology. L-OPA1 and the soluble short form (S-OPA1) form higher-order helical assemblies that coordinate the fusion of mitochondrial inner membranes. Inner membrane-anchored L-OPA1 molecules initiate membrane remodeling by recruiting soluble S-OPA1 to rapidly polymerize into a flexible cylindrical scaffold encaging the mitochondrial inner membrane. Once at the membrane surface, the formation of S-OPA1 helices induce bilayer curvature. OPA1 dimerization through the paddle region, which inserts into cardiolipin-containing membrane, promotes GTP hydrolysis and the helical assembly of a flexible OPA1 lattice on the membrane, which drives membrane curvature and mitochondrial fusion. Plays a role in the maintenance and remodeling of mitochondrial cristae, some invaginations of the mitochondrial inner membrane that provide an increase in the surface area. Probably acts by forming helical filaments at the inside of inner membrane tubes with the shape and dimensions of crista junctions. The equilibrium between L-OPA1 and S-OPA1 influences cristae shape and morphology: increased L-OPA1 levels promote cristae stacking and elongated mitochondria, while increased S-OPA1 levels correlated with irregular cristae packing and round mitochondria shape. Its function is as follows. Constitutes the soluble short form (S-OPA1) generated by cleavage by OMA1, which plays a central role in mitochondrial inner membrane fusion and cristae morphology. The transmembrane long form (L-OPA1) and the S-OPA1 form higher-order helical assemblies that coordinate the fusion of mitochondrial inner membranes. Inner membrane-anchored L-OPA1 molecules initiate membrane remodeling by recruiting soluble S-OPA1 to rapidly polymerize into a flexible cylindrical scaffold encaging the mitochondrial inner membrane. Once at the membrane surface, the formation of S-OPA1 helices induce bilayer curvature. OPA1 dimerization through the paddle region, which inserts into cardiolipin-containing membrane, promotes GTP hydrolysis and the helical assembly of a flexible OPA1 lattice on the membrane, which drives membrane curvature and mitochondrial fusion. Excess levels of S-OPA1 produced by cleavage by OMA1 following stress conditions that induce loss of mitochondrial membrane potential, lead to an impaired equilibrium between L-OPA1 and S-OPA1, thereby inhibiting mitochondrial fusion. Involved in mitochondrial safeguard in response to transient mitochondrial membrane depolarization by mediating flickering: cleavage by OMA1 leads to excess production of S-OPA1, preventing mitochondrial hyperfusion. Plays a role in the maintenance and remodeling of mitochondrial cristae, some invaginations of the mitochondrial inner membrane that provide an increase in the surface area. Probably acts by forming helical filaments at the inside of inner membrane tubes with the shape and dimensions of crista junctions. The equilibrium between L-OPA1 and S-OPA1 influences cristae shape and morphology: increased L-OPA1 levels promote cristae stacking and elongated mitochondria, while increased S-OPA1 levels correlated with irregular cristae packing and round mitochondria shape. In terms of biological role, coexpression of isoform 1 with shorter alternative products is required for optimal activity in promoting mitochondrial fusion. Isoforms that contain the alternative exon 4b are required for mitochondrial genome maintenance, possibly by anchoring the mitochondrial nucleoids to the inner mitochondrial membrane. This Homo sapiens (Human) protein is Dynamin-like GTPase OPA1, mitochondrial.